The primary structure comprises 263 residues: 3-deoxy-manno-octulosonate cytidylyltransferase (263 aa).

This sequence belongs to the KdsB family.

It localises to the cytoplasm. The catalysed reaction is 3-deoxy-alpha-D-manno-oct-2-ulosonate + CTP = CMP-3-deoxy-beta-D-manno-octulosonate + diphosphate. Its pathway is nucleotide-sugar biosynthesis; CMP-3-deoxy-D-manno-octulosonate biosynthesis; CMP-3-deoxy-D-manno-octulosonate from 3-deoxy-D-manno-octulosonate and CTP: step 1/1. The protein operates within bacterial outer membrane biogenesis; lipopolysaccharide biosynthesis. Activates KDO (a required 8-carbon sugar) for incorporation into bacterial lipopolysaccharide in Gram-negative bacteria. This Burkholderia cenocepacia (strain ATCC BAA-245 / DSM 16553 / LMG 16656 / NCTC 13227 / J2315 / CF5610) (Burkholderia cepacia (strain J2315)) protein is 3-deoxy-manno-octulosonate cytidylyltransferase.